The chain runs to 98 residues: NADH-ubiquinone oxidoreductase chain 4L (98 aa).

Helical transmembrane passes span 1 to 21 (MSMVYMNIMMAFTVSLVGLLM), 29 to 49 (SLLCLEGMMLSLFVMAALTIL), and 61 to 81 (IILLVFAACEAALGLSLLVMV).

It belongs to the complex I subunit 4L family. Core subunit of respiratory chain NADH dehydrogenase (Complex I) which is composed of 45 different subunits.

It localises to the mitochondrion inner membrane. It catalyses the reaction a ubiquinone + NADH + 5 H(+)(in) = a ubiquinol + NAD(+) + 4 H(+)(out). Core subunit of the mitochondrial membrane respiratory chain NADH dehydrogenase (Complex I) which catalyzes electron transfer from NADH through the respiratory chain, using ubiquinone as an electron acceptor. Part of the enzyme membrane arm which is embedded in the lipid bilayer and involved in proton translocation. The chain is NADH-ubiquinone oxidoreductase chain 4L (MT-ND4L) from Bos indicus (Zebu).